The primary structure comprises 1087 residues: MGTPPRTFLILGCFLTGPLLTLCQLPLPTIVPNRNEMVVQLNSNFTLKCSGDSEVSWQYPVTEGSHRIDIRHEENNSGLFVTVLEVGNASAAHTGMYVCYYNHTQVEDGEVEGKDIYIYVPDPDMPFVPSLPEDQFILVEEGDPTVIPCRTSDPSAEVTLVNSLDKPVYAFYDSKQGFVGNFLAGPYTCKTMVKGVEFKSDEFLIYILRATSQLPVEIEALKTVYKTGETIVVTCVVFDNEVVNLQWNYPGKVKEKGLIKLDDIKVPSQKLVYMLTIPDVLVKDTGDYECTARHATKEVKENKKVVITVHDKGFIHLEPQFSPLEAVNLHEVKNFVVDVQAYPAPKMYWLKDNVTLIENLTEIVTSSNRVQETRFQSVLKLIRAKEEDSGTILWLLKNEDEIKRYTFSLLIQVPALILDLMDDHQGSAGRQTVRCLAEGTPLPDVEWLVCKDIKKCSNDTSWTLLTNNISDIHMEAHLDERNMVESQVTFQKVEETLAVRCVARNDLGAVTRELKLVAPTLRSELTVAAAVLVLLVIVIISLIVLVIIWKQKPRYEIRWRVIESISPDGHEYIYVDPMQLPYDSRWEFPRDGLVLGRILGSGAFGKVVEGTAYGLSRSQPVMKVAVKMLKPTARSSEKQALMSELKIMTHLGPHLNIVNLLGACTKSGPIYIITEYCFYGDLVNYLHKNRDNFLSRHPEKPKKDLDIFGMNPADESTRSYVILSFENTGEYMDMKQADTTQYVPMLERKEGSKYSDIQRSVYDRPASYKKKSLSESEVKNLLSDDGSEGLSLLDLLSFTYQVARGMEFLASKNCVHRDLAARNVLLAQGKIVKICDFGLARDIMHDSNYVSKGSTFLPVKWMAPESIFDNLYTTLSDVWSYGILLWEIFSLGGILYPGMMVDSTFYNKIKSGYRMAKPDHATNEVYEIMVKCWNNEPEKRPSFYHLSEIVESLLPGEYKKSYEKIHLDFLKSDHPAVTRMRGDCDNAYIGVTYKNEDKIKDRESGFDEQRLSADSGYITPLPDIDPVSEDELGKRNRHSSQTSEESAIETGSSSSTFIKREDETIEDIDMMDDIGIDSSDLVEDSFL.

The first 23 residues, 1–23 (MGTPPRTFLILGCFLTGPLLTLC), serve as a signal peptide directing secretion. The Extracellular portion of the chain corresponds to 24–528 (QLPLPTIVPN…PTLRSELTVA (505 aa)). Ig-like C2-type domains lie at 26–104 (PLPT…YNHT), 116–208 (IYIY…IYIL), 213–312 (QLPV…VHDK), 314–411 (FIHL…SLLI), and 414–517 (PALI…LKLV). N-linked (GlcNAc...) asparagine glycosylation is found at N44, N75, N88, and N102. Cysteines 49 and 99 form a disulfide. 2 cysteine pairs are disulfide-bonded: C149-C189 and C235-C290. N-linked (GlcNAc...) asparagine glycans are attached at residues N353, N359, N458, and N468. C435 and C501 are oxidised to a cystine. The helical transmembrane segment at 529–549 (AAVLVLLVIVIISLIVLVIIW) threads the bilayer. Residues 550 to 1087 (KQKPRYEIRW…SSDLVEDSFL (538 aa)) lie on the Cytoplasmic side of the membrane. Phosphotyrosine; by autocatalysis occurs at positions 572 and 574. The region spanning 593–954 (LVLGRILGSG…HLSEIVESLL (362 aa)) is the Protein kinase domain. ATP contacts are provided by residues 599-607 (LGSGAFGKV) and K627. Y720, Y731, Y742, Y754, Y762, and Y768 each carry phosphotyrosine; by autocatalysis. The active-site Proton acceptor is D818. Residues Y849 and Y988 each carry the phosphotyrosine; by autocatalysis modification. Positions 1000 to 1011 (KDRESGFDEQRL) are enriched in basic and acidic residues. A disordered region spans residues 1000–1059 (KDRESGFDEQRLSADSGYITPLPDIDPVSEDELGKRNRHSSQTSEESAIETGSSSSTFIK). Position 1017 is a phosphotyrosine; by autocatalysis (Y1017). Polar residues predominate over residues 1039-1057 (SSQTSEESAIETGSSSSTF).

This sequence belongs to the protein kinase superfamily. Tyr protein kinase family. CSF-1/PDGF receptor subfamily. As to quaternary structure, interacts with homodimeric PDGFA, PDGFB and PDGFC, and with heterodimers formed by PDGFA and PDGFB. Monomer in the absence of bound ligand. Interaction with dimeric PDGFA, PDGFB and/or PDGFC leads to receptor dimerization, where both PDGFRA homodimers and heterodimers with PDGFRB are observed. Post-translationally, ubiquitinated, leading to its internalization and degradation. In terms of processing, autophosphorylated on tyrosine residues upon ligand binding. Autophosphorylation occurs in trans, i.e. one subunit of the dimeric receptor phosphorylates tyrosine residues on the other subunit.

It is found in the cell membrane. The protein localises to the cell projection. Its subcellular location is the cilium. The protein resides in the golgi apparatus. The catalysed reaction is L-tyrosyl-[protein] + ATP = O-phospho-L-tyrosyl-[protein] + ADP + H(+). With respect to regulation, present in an inactive conformation in the absence of bound ligand. Binding of PDGFA and/or PDGFB leads to dimerization and activation by autophosphorylation on tyrosine residues. Its function is as follows. Tyrosine-protein kinase that acts as a cell-surface receptor for PDGFA, PDGFB and PDGFC and plays an essential role in the regulation of embryonic development, cell proliferation, survival and chemotaxis. Depending on the context, promotes or inhibits cell proliferation and cell migration. Plays an important role in the differentiation of bone marrow-derived mesenchymal stem cells. Required for normal skeleton development. Required for normal development of the gastrointestinal tract. Plays a role in cell migration and chemotaxis in wound healing. Plays a role in platelet activation, secretion of agonists from platelet granules, and in thrombin-induced platelet aggregation. Binding of its cognate ligands - homodimeric PDGFA, homodimeric PDGFB, heterodimers formed by PDGFA and PDGFB or homodimeric PDGFC -leads to the activation of several signaling cascades; the response depends on the nature of the bound ligand and is modulated by the formation of heterodimers between PDGFRA and PDGFRB. Phosphorylates PIK3R1, PLCG1, and PTPN11. Activation of PLCG1 leads to the production of the cellular signaling molecules diacylglycerol and inositol 1,4,5-trisphosphate, mobilization of cytosolic Ca(2+) and the activation of protein kinase C. Phosphorylates PIK3R1, the regulatory subunit of phosphatidylinositol 3-kinase, and thereby mediates activation of the AKT1 signaling pathway. Mediates activation of HRAS and of the MAP kinases MAPK1/ERK2 and/or MAPK3/ERK1. Promotes activation of STAT family members STAT1, STAT3 and STAT5A and/or STAT5B. Receptor signaling is down-regulated by protein phosphatases that dephosphorylate the receptor and its down-stream effectors, and by rapid internalization of the activated receptor. The protein is Platelet-derived growth factor receptor alpha (PDGFRA) of Gallus gallus (Chicken).